The chain runs to 269 residues: Meiotic drive suppressor wtf5 (269 aa).

Residues 1 to 65 are disordered; sequence MKNNYTSLKS…NTHRENHSYG (65 aa). Residues 19–30 show a composition bias toward basic and acidic residues; it reads KTDHEIDLEKGP. Helical transmembrane passes span 73-95, 110-132, and 206-228; these read LLII…VCYL, WTLF…YFYE, and WGLK…VFIA.

Belongs to the WTF family. In terms of assembly, homomer. Interacts with other proteins that exhibit high sequence similarity.

The protein localises to the spore membrane. Its subcellular location is the vacuole membrane. In terms of biological role, acts as a suppressor component of the dual wtf meiotic drive system, and can suppress but not confer meiotic drive by compatible poisons. Wtf meiotic drive systems promote unequal transmission of alleles from the parental zygote to progeny spores by encoding a poison and an antidote from the same locus; the poison is trans-acting and forms toxic aggregates in all spores within an ascus, wherease the antidote is spore-specific and targets aggregates for degradation by the vacuole. Meiotic drive by wtf systems therefore lead to poisoning of all progeny that do not inherit the dual poison/antidote allele, or express a compatible antidote. This chain is Meiotic drive suppressor wtf5, found in Schizosaccharomyces pombe (strain 972 / ATCC 24843) (Fission yeast).